A 436-amino-acid chain; its full sequence is F-box/LRR-repeat protein At2g40920 (436 aa).

In terms of domain architecture, F-box spans 48-98 (EYLLQNFDLDHVMEILMRFPLTSLTRFKCVSKQWSSLISSRYFCNLLYTTV). LRR repeat units lie at residues 276-301 (NCVVVSFDIRSEQLTIIPVPREIHLD) and 393-416 (YYNLQSNDLRKVEIKGVPDSWFDK).

The sequence is that of F-box/LRR-repeat protein At2g40920 from Arabidopsis thaliana (Mouse-ear cress).